Reading from the N-terminus, the 197-residue chain is Putative WUSCHEL-related homeobox 10 (197 aa).

Residues 75–139 (STRPRWTPTT…NRRARSKRKQ (65 aa)) constitute a DNA-binding region (homeobox; WUS-type). The tract at residues 132–168 (RARSKRKQPPTTTITSSQADDAAVTTTEERGRCGDDS) is disordered. A compositionally biased stretch (polar residues) spans 140–150 (PPTTTITSSQA).

It belongs to the WUS homeobox family.

The protein resides in the nucleus. Functionally, potential transcription factor that plays a central role during developmental processes. This Arabidopsis thaliana (Mouse-ear cress) protein is Putative WUSCHEL-related homeobox 10 (WOX10).